Here is a 986-residue protein sequence, read N- to C-terminus: Ephrin type-A receptor 4 (986 aa).

Positions 1 to 19 are cleaved as a signal peptide; it reads MAGIFYFALFSCLFGICDA. Residues 20 to 547 are Extracellular-facing; that stretch reads VTGSRVYPAN…RIIGDGANST (528 aa). The Eph LBD domain maps to 30–209; that stretch reads EVTLLDSRSV…FYKKCPLTVR (180 aa). N235, N340, and N408 each carry an N-linked (GlcNAc...) asparagine glycan. Fibronectin type-III domains are found at residues 328–439 and 440–537; these read PPSA…TNQA and APSS…TVPS. An N-linked (GlcNAc...) asparagine glycan is attached at N545. A helical transmembrane segment spans residues 548–569; that stretch reads VLLVSVSGSVVLVVILIAAFVI. The Cytoplasmic segment spans residues 570–986; that stretch reads SRRRSKYSKA…QQMHGRMVPV (417 aa). Phosphotyrosine; by autocatalysis occurs at positions 596 and 602. A Protein kinase domain is found at 621–882; it reads IKIEKVIGVG…QIVNMLDKLI (262 aa). ATP contacts are provided by residues 627 to 635 and K653; that span reads IGVGEFGEV. D746 serves as the catalytic Proton acceptor. Phosphotyrosine; by autocatalysis occurs at positions 779 and 928. Residues 911–975 form the SAM domain; the sequence is SAVVSVGDWL…LSSVQAMRTQ (65 aa). The short motif at 984-986 is the PDZ-binding element; it reads VPV.

The protein belongs to the protein kinase superfamily. Tyr protein kinase family. Ephrin receptor subfamily. As to quaternary structure, heterotetramer upon binding of the ligand. The heterotetramer is composed of an ephrin dimer and a receptor dimer. Oligomerization is probably required to induce biological responses. Interacts (phosphorylated at position Tyr-602) with FYN. Interacts with CDK5, CDK5R1 and NGEF; upon activation by EFNA1 induces NGEF phosphorylation by the kinase CDK5. Interacts with CHN1; effector of EPHA4 in axon guidance linking EPHA4 activation to RAC1 regulation. Interacts (via PDZ motif) with SIPA1L1 (via PDZ domain); controls neuronal morphology through regulation of the RAP1 (RAP1A or RAP1B) and RAP2 (RAP2A, RAP2B or RAP2C) GTPases. Forms a ternary complex composed of ADAM10, CADH1 and EPHA4; within the complex, CADH1 is cleaved by ADAM10 which disrupts adherens junctions. Ubiquitous.

The protein resides in the cell membrane. The protein localises to the cell projection. Its subcellular location is the axon. It is found in the dendrite. It localises to the postsynaptic density membrane. The protein resides in the early endosome. The protein localises to the cell junction. Its subcellular location is the adherens junction. It catalyses the reaction L-tyrosyl-[protein] + ATP = O-phospho-L-tyrosyl-[protein] + ADP + H(+). In terms of biological role, receptor tyrosine kinase which binds membrane-bound ephrin family ligands residing on adjacent cells, leading to contact-dependent bidirectional signaling into neighboring cells. The signaling pathway downstream of the receptor is referred to as forward signaling while the signaling pathway downstream of the ephrin ligand is referred to as reverse signaling. Highly promiscuous, it has the unique property among Eph receptors to bind and to be physiologically activated by both GPI-anchored ephrin-A and transmembrane ephrin-B ligands including EFNA1 and EFNB3. Upon activation by ephrin ligands, modulates cell morphology and integrin-dependent cell adhesion through regulation of the Rac, Rap and Rho GTPases activity. Plays an important role in the development of the nervous system controlling different steps of axonal guidance including the establishment of the corticospinal projections. May also control the segregation of motor and sensory axons during neuromuscular circuit development. In addition to its role in axonal guidance plays a role in synaptic plasticity. Activated by EFNA1 phosphorylates CDK5 at 'Tyr-15' which in turn phosphorylates NGEF regulating RHOA and dendritic spine morphogenesis. In the nervous system, also plays a role in repair after injury preventing axonal regeneration and in angiogenesis playing a role in central nervous system vascular formation. Additionally, its promiscuity makes it available to participate in a variety of cell-cell signaling regulating for instance the development of the thymic epithelium. During development of the cochlear organ of Corti, regulates pillar cell separation by forming a ternary complex with ADAM10 and CADH1 which facilitates the cleavage of CADH1 by ADAM10 and disruption of adherens junctions. Phosphorylates CAPRIN1, promoting CAPRIN1-dependent formation of a membraneless compartment. This is Ephrin type-A receptor 4 (EPHA4) from Homo sapiens (Human).